The sequence spans 266 residues: Hydroxyacylglutathione hydrolase (266 aa).

Zn(2+) is bound by residues H53, H55, D57, H58, H118, D140, and H178.

It belongs to the metallo-beta-lactamase superfamily. Glyoxalase II family. In terms of assembly, monomer. The cofactor is Zn(2+).

It catalyses the reaction an S-(2-hydroxyacyl)glutathione + H2O = a 2-hydroxy carboxylate + glutathione + H(+). Its pathway is secondary metabolite metabolism; methylglyoxal degradation; (R)-lactate from methylglyoxal: step 2/2. Functionally, thiolesterase that catalyzes the hydrolysis of S-D-lactoyl-glutathione to form glutathione and D-lactic acid. The polypeptide is Hydroxyacylglutathione hydrolase (Cupriavidus taiwanensis (strain DSM 17343 / BCRC 17206 / CCUG 44338 / CIP 107171 / LMG 19424 / R1) (Ralstonia taiwanensis (strain LMG 19424))).